The following is a 324-amino-acid chain: Protein GET4 (324 aa).

This sequence belongs to the GET4 family. As to quaternary structure, interacts with GET3A.

It localises to the cytoplasm. It is found in the cytosol. Involved in the regulation of root hair growth. In Arabidopsis thaliana (Mouse-ear cress), this protein is Protein GET4.